A 215-amino-acid polypeptide reads, in one-letter code: Small ribosomal subunit protein uS2 (215 aa).

Belongs to the universal ribosomal protein uS2 family.

The chain is Small ribosomal subunit protein uS2 from Caldivirga maquilingensis (strain ATCC 700844 / DSM 13496 / JCM 10307 / IC-167).